We begin with the raw amino-acid sequence, 205 residues long: N-(5'-phosphoribosyl)anthranilate isomerase (205 aa).

This sequence belongs to the TrpF family.

It catalyses the reaction N-(5-phospho-beta-D-ribosyl)anthranilate = 1-(2-carboxyphenylamino)-1-deoxy-D-ribulose 5-phosphate. It functions in the pathway amino-acid biosynthesis; L-tryptophan biosynthesis; L-tryptophan from chorismate: step 3/5. This chain is N-(5'-phosphoribosyl)anthranilate isomerase (TRP1), found in Zygosaccharomyces bailii.